Here is a 2768-residue protein sequence, read N- to C-terminus: Thyroglobulin (2768 aa).

A signal peptide spans 1 to 20; that stretch reads MMTLVLWVSTLLSSVCLVAA. An Iodotyrosine; alternate modification is found at Y25. Y25 carries the sulfotyrosine; alternate modification. Y25 carries the thyroxine; alternate modification. Triiodothyronine; alternate is present on Y25. Thyroglobulin type-1 domains are found at residues 32 to 93, 94 to 161, 162 to 298, and 299 to 359; these read LRPC…PTAC, LSFC…PTRC, PRSC…RFRC, and PTKC…PLFC. Intrachain disulfides connect C35/C53, C64/C71, C73/C93, C97/C121, C132/C139, C141/C161, C165/C184, and C195/C236. Iodotyrosine is present on Y109. The N-linked (GlcNAc...) asparagine glycan is linked to N111. An Iodotyrosine; alternate modification is found at Y150. Y150 is modified (diiodotyrosine; alternate). N199 carries an N-linked (GlcNAc...) asparagine glycan. An iodotyrosine mark is found at Y235 and Y259. Disulfide bonds link C302-C320, C331-C337, C339-C365, C408-C608, C631-C636, C638-C658, C662-C687, and C698-C703. N-linked (GlcNAc...) asparagine glycosylation is found at N484, N496, and N545. 6 consecutive Thyroglobulin type-1 domains span residues 605 to 658, 659 to 726, 727 to 922, 923 to 1074, 1075 to 1146, and 1147 to 1211; these read AQAC…HPRC, PTKC…PKLC, PSVC…IPAC, PGPC…MPQC, PTSC…SAQC, and PGLC…QPAC. The residue at position 704 (Y704) is an Iodotyrosine; alternate. Thyroxine; alternate is present on Y704. Position 704 is a triiodothyronine; alternate (Y704). The residue at position 704 (Y704) is a Diiodotyrosine; alternate. 16 disulfides stabilise this stretch: C705-C726, C730-C763, C774-C899, C901-C922, C926-C1032, C1043-C1050, C1052-C1074, C1078-C1109, C1127-C1146, C1150-C1170, C1182-C1189, C1191-C1211, C1216-C1265, C1232-C1246, C1306-C1356, and C1331-C1347. A glycan (N-linked (GlcNAc...) asparagine) is linked at N748. Residue Y785 is modified to Iodotyrosine. N-linked (GlcNAc...) asparagine glycosylation is present at N817. Y867 carries the post-translational modification Iodotyrosine; alternate. Y867 is modified (diiodotyrosine; alternate). Y884 is subject to Diiodotyrosine. N-linked (GlcNAc...) asparagine glycosylation is present at N948. Residue Y993 is modified to Iodotyrosine; alternate. Y993 is modified (diiodotyrosine; alternate). N1017 carries an N-linked (GlcNAc...) asparagine glycan. Residue N1141 is glycosylated (N-linked (GlcNAc...) asparagine). Residue Y1310 is modified to Iodotyrosine. Y1310 is subject to Thyroxine. N1349 and N1365 each carry an N-linked (GlcNAc...) asparagine glycan. Cystine bridges form between C1441–C1458, C1461–C1472, C1475–C1489, C1492–C1509, C1513–C1522, C1542–C1564, C1602–C1626, C1606–C1612, and C1638–C1661. Type II repeat units follow at residues 1455-1468, 1469-1485, and 1486-1502; these read PLGC…SFSQ, DGKC…GQAG, and SSAC…TITG. Residues 1510–1564 form the Thyroglobulin type-1 11 domain; that stretch reads VTDCQRDEAGLQCDQNGQYQANQKDMDSGEVFCVDSEGQRLQWLQTEAGLSESQC. One copy of the Type IIIA repeat lies at 1602-1722; it reads CLADCADDEA…GTNLTDTHLF (121 aa). An N-linked (GlcNAc...) asparagine glycan is attached at N1715. Intrachain disulfides connect C1723-C1748, C1727-C1733, C1732-C1834, and C1759-C1776. Residues 1723-1891 form a Type IIIB repeat; it reads CLLACDQDSC…LFSAEQANLW (169 aa). N1773 and N1866 each carry an N-linked (GlcNAc...) asparagine glycan. Cystine bridges form between C1892–C1918, C1896–C1903, C1927–C1938, C1995–C2023, C1999–C2005, C2004–C2075, and C2034–C2047. The stretch at 1892-1994 is one Type IIIA repeat; sequence CLSRCAQEPV…EKLISNGFFE (103 aa). N-linked (GlcNAc...) asparagine glycosylation occurs at N1937. The Type IIIB repeat unit spans residues 1995–2127; sequence CERLCDRDPC…SATRNFSLAQ (133 aa). The N-linked (GlcNAc...) asparagine glycan is linked to N2012. N2122 carries N-linked (GlcNAc...) asparagine glycosylation. The Type IIIA repeat unit spans residues 2128–2185; sequence DFCLQECSRHQDCLVTTLQIQQGVVRCVFYPDIQSCEHSLRSKTCWLLLHEEAAYIYR. 3 cysteine pairs are disulfide-bonded: C2130–C2154, C2134–C2140, and C2163–C2172. Position 2184 is an iodotyrosine (Y2184). Residues 2188 to 2768 form a cholinesterase-like (ChEL) region; it reads GAPLHQSDGI…LEPVPKSYSK (581 aa). N2251 is a glycosylation site (N-linked (GlcNAc...) asparagine). A disulfide bridge connects residues C2265 and C2282. N-linked (GlcNAc...) asparagine glycans are attached at residues N2296 and N2445. A disulfide bridge links C2443 with C2454. Y2541 bears the Thyroxine mark. The residue at position 2574 (Y2574) is an Iodotyrosine; alternate. Residue Y2574 is modified to Thyroxine; alternate. Triiodothyronine; alternate is present on Y2574. Diiodotyrosine; alternate is present on Y2574. N-linked (GlcNAc...) asparagine glycosylation occurs at N2583. 2 positions are modified to iodotyrosine: Y2588 and Y2618. An intrachain disulfide couples C2592 to C2716. Y2698 bears the Diiodotyrosine mark. Residues 2731–2768 form a disordered region; it reads GAKDAQLTKSGEEDLEVGPGSEEDFSGSLEPVPKSYSK. The span at 2743–2755 shows a compositional bias: acidic residues; the sequence is EDLEVGPGSEEDF. Y2766 is subject to Iodotyrosine; alternate. Y2766 carries the post-translational modification Thyroxine; alternate. Y2766 carries the post-translational modification Triiodothyronine; alternate. Y2766 is modified (diiodotyrosine; alternate).

This sequence belongs to the type-B carboxylesterase/lipase family. As to quaternary structure, monomer. Homodimer (via ChEL region); occurs in the endoplasmic reticulum and is required for export to the Golgi apparatus. Homooligomer; disulfide-linked; stored in this form in the thyroid follicle lumen. In terms of processing, iodinated on tyrosine residues by TPO. There are 4 pairs of iodinated tyrosines used for coupling: acceptor Tyr-25 is coupled to donor Tyr-150 or Tyr-235, acceptor Tyr-2574 is coupled to donor Tyr-2541, acceptor Tyr-2766 in monomer 1 is coupled to donor Tyr-2766 in monomer 2 and acceptor Tyr-1310 in monomer 1 is coupled to donor Tyr-109 in monomer 2. Post-translationally, sulfated tyrosines are desulfated during iodination. Undergoes sequential proteolysis by cathepsins to release thyroxine (T4) and triiodothyronine (T3) hormones. In the thyroid follicle lumen, cross-linked TG (storage form) is solubilized by limited proteolysis mediated by cathepsins CTSB and/or CTSL. Partially cleaved TG is further processed by CTSK/cathepsin K and/or CTSL resulting in the release of thyroxine (T4). Following endocytosis, further processing occurs leading to the release of triiodothyronine (T3) and more T4 hormones. In terms of tissue distribution, specifically expressed in the thyroid gland.

It is found in the secreted. Acts as a substrate for the production of iodinated thyroid hormones thyroxine (T4) and triiodothyronine (T3). The synthesis of T3 and T4 involves iodination of selected tyrosine residues of TG/thyroglobulin followed by their oxidative coupling. Following TG re-internalization and lysosomal-mediated proteolysis, T3 and T4 are released from the polypeptide backbone leading to their secretion into the bloodstream. One dimer produces 7 thyroid hormone molecules. In Rattus norvegicus (Rat), this protein is Thyroglobulin (Tg).